The following is a 2272-amino-acid chain: Voltage-dependent R-type calcium channel subunit alpha-1E (2272 aa).

Residues 1-40 (MARFGEAVVVGRPGSGDGDSDQSRNRQGTPVPASGPAAAY) form a disordered region. Topologically, residues 1 to 90 (MARFGEAVVV…KYAKKLIDWP (90 aa)) are cytoplasmic. 2 positions are modified to phosphoserine: S15 and S20. An I repeat occupies 77–355 (NIVRKYAKKL…LVLGVLSGEF (279 aa)). Residues 91–109 (PFEYMILATIIANCIVLAL) form a helical membrane-spanning segment. Topologically, residues 110 to 128 (EQHLPEDDKTPMSRRLEKT) are extracellular. The chain crosses the membrane as a helical span at residues 129 to 147 (EPYFIGIFCFEAGIKIVAL). Residues 148 to 159 (GFIFHKGSYLRN) are Cytoplasmic-facing. The helical transmembrane segment at 160-174 (GWNVMDFIVVLSGIL) threads the bilayer. Residues 175-186 (ATAGTHFNTHVD) lie on the Extracellular side of the membrane. Residues 187-206 (LRALRAVRVLRPLKLVSGIP) traverse the membrane as a helical segment. Topologically, residues 207–224 (SLQIVLKSIMKAMVPLLQ) are cytoplasmic. Residues 225–245 (IGLLLFFAILMFAIIGLEFYS) form a helical membrane-spanning segment. At 246–327 (GKLHRACFMN…NTNDALGATW (82 aa)) the chain is on the extracellular side. N-linked (GlcNAc...) asparagine glycosylation is present at N255. A helical transmembrane segment spans residues 328 to 351 (NWLYFIPLIIIGSFFVLNLVLGVL). Residues 352–477 (SGEFAKERER…ISIRHMVKSQ (126 aa)) lie on the Cytoplasmic side of the membrane. The segment at 375 to 392 (QQIERELNGYRAWIDKAE) is binding to the beta subunit. D427 provides a ligand contact to Ca(2+). S428 is modified (phosphoserine). Residues S429, E431, C433, and S438 each coordinate Ca(2+). Residue T441 is modified to Phosphothreonine. Residues 463 to 707 (ERLLRISIRH…VFLAIAVDNL (245 aa)) form an II repeat. Residues 478–497 (VFYWIVLSVVALNTACVAIV) traverse the membrane as a helical segment. Residues 498–510 (HHNQPQWLTHLLY) are Extracellular-facing. Residues 511-530 (YAEFLFLGLFLLEMSLKMYG) traverse the membrane as a helical segment. Residues 531 to 539 (MGPRLYFHS) are Cytoplasmic-facing. A helical transmembrane segment spans residues 540–558 (SFNCFDFGVTVGSIFEVVW). At 559–568 (AIFRPGTSFG) the chain is on the extracellular side. A helical membrane pass occupies residues 569–587 (ISVLRALRLLRIFKITKYW). Residues 588–606 (ASLRNLVVSLMSSMKSIIS) lie on the Cytoplasmic side of the membrane. The helical transmembrane segment at 607 to 626 (LLFLLFLFIVVFALLGMQLF) threads the bilayer. The Extracellular portion of the chain corresponds to 627-679 (GGRFNFNDGTPSANFDTFPAAIMTVFQILTGEDWNEVMYNGIRSQGGVSSGMW). Residues 680 to 704 (SAIYFIVLTLFGNYTLLNVFLAIAV) form a helical membrane-spanning segment. Topologically, residues 705 to 1150 (DNLANAQELT…TTNPIRRACH (446 aa)) are cytoplasmic. A disordered region spans residues 730 to 777 (LQKAKEVSPMSAPNMPSIERDRRRRHHMSMWEPRSSHLRERRRRHHMS). Residues S737, S746, S794, S816, and S856 each carry the phosphoserine modification. 2 disordered regions span residues 854 to 994 (GGSL…VPRG) and 1091 to 1127 (SNKT…RETG). Basic residues predominate over residues 914 to 927 (RHRQSQRRSRHRRV). Positions 934–946 (SASASRSRSASQE) are enriched in low complexity. S948 carries the post-translational modification Phosphoserine. Basic and acidic residues-rich tracts occupy residues 956 to 985 (EGEK…DLRR) and 1094 to 1105 (TDGEASPLKEAE). S1099 is subject to Phosphoserine. An III repeat occupies 1143–1429 (NPIRRACHYI…IFVALIIITF (287 aa)). Residues 1151–1167 (YIVNLRYFEMCILLVIA) traverse the membrane as a helical segment. Over 1168-1191 (ASSIALAAEDPVLTNSERNKVLRY) the chain is Extracellular. The helical transmembrane segment at 1192–1211 (FDYVFTGVFTFEMVIKMIDQ) threads the bilayer. The Cytoplasmic portion of the chain corresponds to 1212–1219 (GLILQDGS). Residues 1220–1242 (YFRDLWNILDFVVVVGALVAFAL) form a helical membrane-spanning segment. The Extracellular portion of the chain corresponds to 1243 to 1256 (ANALGTNKGRDIKT). Residues 1257-1274 (IKSLRVLRVLRPLKTIKR) traverse the membrane as a helical segment. Over 1275-1293 (LPKLKAVFDCVVTSLKNVF) the chain is Cytoplasmic. The helical transmembrane segment at 1294–1313 (NILIVYKLFMFIFAVIAVQL) threads the bilayer. The Extracellular segment spans residues 1314-1400 (FKGKFFYCTD…DRGPSRSNRM (87 aa)). Residues 1401-1424 (EMSIFYVVYFVVFPFFFVNIFVAL) traverse the membrane as a helical segment. Topologically, residues 1425-1481 (IIITFQEQGDKMMEECSLEKNERACIDFAISAKPLTRYMPQNRHTFQYRVWHFVVSP) are cytoplasmic. One copy of the IV repeat lies at 1466–1729 (NRHTFQYRVW…LFVAVIMDNF (264 aa)). Residues 1482-1500 (SFEYTIMAMIALNTVVLMM) traverse the membrane as a helical segment. Residues 1501 to 1515 (KYYTAPCTYELALKY) are Extracellular-facing. The chain crosses the membrane as a helical span at residues 1516-1535 (LNIAFTMVFSLECVLKVIAF). The Cytoplasmic segment spans residues 1536–1543 (GFLNYFRD). A helical membrane pass occupies residues 1544-1562 (TWNIFDFITVIGSITEIIL). Over 1563 to 1573 (TDSKLVNTSGF) the chain is Extracellular. N1569 carries N-linked (GlcNAc...) asparagine glycosylation. A helical transmembrane segment spans residues 1574–1592 (NMSFLKLFRAARLIKLLRQ). At 1593-1611 (GYTIRILLWTFVQSFKALP) the chain is on the cytoplasmic side. A helical membrane pass occupies residues 1612-1631 (YVCLLIAMLFFIYAIIGMQV). The Extracellular segment spans residues 1632–1700 (FGNIKLDEES…QNESERCGTD (69 aa)). Residue N1692 is glycosylated (N-linked (GlcNAc...) asparagine). Residues 1701–1726 (LAYVYFVSFIFFCSFLMLNLFVAVIM) form a helical membrane-spanning segment. The Cytoplasmic portion of the chain corresponds to 1727–2272 (DNFEYLTRDS…LSDTEEDDKC (546 aa)). Residues 1742–1777 (HHLDEFVRVWAEYDRAACGRIHYTEMYEMLTLMSPP) enclose the EF-hand domain. Ca(2+) is bound by residues D1755, R1761, and E1766. The disordered stretch occupies residues 2021–2186 (SAHRLNSDSG…QQGQHPSPQH (166 aa)). Over residues 2025–2045 (LNSDSGHKSDTHRSGGRERGR) the composition is skewed to basic and acidic residues. A phosphoserine mark is found at S2054 and S2073. Residues 2061 to 2078 (NSEERGTQADWESPERRQ) are compositionally biased toward basic and acidic residues. The span at 2097–2112 (SLSESSIPSISDTSTP) shows a compositional bias: low complexity. Positions 2155-2174 (LASQALESNSACLTESSNSL) are enriched in polar residues. Residues 2175-2186 (HPQQGQHPSPQH) are compositionally biased toward low complexity.

The protein belongs to the calcium channel alpha-1 subunit (TC 1.A.1.11) family. CACNA1E subfamily. Interacts with EFHC1. Voltage-dependent calcium channels are multisubunit complexes, consisting of alpha-1, alpha-2, beta and delta subunits in a 1:1:1:1 ratio. The channel activity is directed by the pore-forming and voltage-sensitive alpha-1 subunit. In many cases, this subunit is sufficient to generate voltage-sensitive calcium channel activity. The auxiliary subunits beta and alpha-2/delta linked by a disulfide bridge regulate the channel activity. As to expression, expressed in neuronal tissues, retina, spleen, and pancreatic islet cells.

It localises to the membrane. The enzyme catalyses Ca(2+)(in) = Ca(2+)(out). Its function is as follows. Voltage-sensitive calcium channels (VSCC) mediate the entry of calcium ions into excitable cells and are also involved in a variety of calcium-dependent processes, including muscle contraction, hormone or neurotransmitter release, gene expression, cell motility, cell division and cell death. The isoform alpha-1E gives rise to R-type calcium currents. R-type calcium channels belong to the 'high-voltage activated' (HVA) group and are blocked by nickel. They are however insensitive to dihydropyridines (DHP). Calcium channels containing alpha-1E subunit could be involved in the modulation of firing patterns of neurons which is important for information processing. The sequence is that of Voltage-dependent R-type calcium channel subunit alpha-1E (Cacna1e) from Mus musculus (Mouse).